A 233-amino-acid chain; its full sequence is Small ribosomal subunit protein uS3 (233 aa).

Residues 39-107 (VRQFLMKTLE…PVQINISEVR (69 aa)) form the KH type-2 domain.

It belongs to the universal ribosomal protein uS3 family. In terms of assembly, part of the 30S ribosomal subunit. Forms a tight complex with proteins S10 and S14.

In terms of biological role, binds the lower part of the 30S subunit head. Binds mRNA in the 70S ribosome, positioning it for translation. The sequence is that of Small ribosomal subunit protein uS3 from Buchnera aphidicola subsp. Acyrthosiphon pisum (strain APS) (Acyrthosiphon pisum symbiotic bacterium).